Consider the following 291-residue polypeptide: MAKDLDVNESGPPAARDYKDPPPAPFFDMEELRKWPLYRAVIAEFVATLLFLYVSILTVIGYKAQTDATAGGVDCGGVGILGIAWAFGGMIFVLVYCTAGISGGHINPAVTVGLFLARKVSLVRTVLYIVAQCLGAICGCGFVKAFQSSYYTRYGGGANELADGYNKGTGLGAEIIGTFVLVYTVFSATDPKRNARDSHVPVLAPLPIGFAVFMVHLATIPITGTGINPARSFGAAVIYNNEKAWDDQWIFWVGPMIGAAAAAFYHQFILRAAAIKALGSFGSFGSFRSFA.

The residue at position 1 (M1) is an N-acetylmethionine. Residues 1 to 22 (MAKDLDVNESGPPAARDYKDPP) are disordered. Residue A2 is modified to N-acetylalanine; in Probable aquaporin PIP2-4, N-terminally processed. Residues 2–39 (AKDLDVNESGPPAARDYKDPPPAPFFDMEELRKWPLYR) are Cytoplasmic-facing. An N6,N6-dimethyllysine modification is found at K3. The helical transmembrane segment at 40–60 (AVIAEFVATLLFLYVSILTVI) threads the bilayer. Residues 61-74 (GYKAQTDATAGGVD) lie on the Extracellular side of the membrane. A helical membrane pass occupies residues 75-95 (CGGVGILGIAWAFGGMIFVLV). At 96-125 (YCTAGISGGHINPAVTVGLFLARKVSLVRT) the chain is on the cytoplasmic side. The NPA 1 motif lies at 107-109 (NPA). A helical transmembrane segment spans residues 126 to 146 (VLYIVAQCLGAICGCGFVKAF). The Extracellular portion of the chain corresponds to 147–167 (QSSYYTRYGGGANELADGYNK). Residues 168-188 (GTGLGAEIIGTFVLVYTVFSA) traverse the membrane as a helical segment. Residues 189-201 (TDPKRNARDSHVP) are Cytoplasmic-facing. A helical transmembrane segment spans residues 202 to 222 (VLAPLPIGFAVFMVHLATIPI). Residues 223–249 (TGTGINPARSFGAAVIYNNEKAWDDQW) are Extracellular-facing. The short motif at 228–230 (NPA) is the NPA 2 element. A helical membrane pass occupies residues 250 to 270 (IFWVGPMIGAAAAAFYHQFIL). Residues 271-291 (RAAAIKALGSFGSFGSFRSFA) are Cytoplasmic-facing. Residues S283, S286, and S289 each carry the phosphoserine modification.

This sequence belongs to the MIP/aquaporin (TC 1.A.8) family. PIP (TC 1.A.8.11) subfamily. Expressed in roots.

Its subcellular location is the cell membrane. Aquaporins facilitate the transport of water and small neutral solutes across cell membranes. The chain is Probable aquaporin PIP2-4 (PIP2-4) from Arabidopsis thaliana (Mouse-ear cress).